Here is a 485-residue protein sequence, read N- to C-terminus: Glutamyl-tRNA(Gln) amidotransferase subunit A (485 aa).

Catalysis depends on charge relay system residues lysine 79 and serine 154. Catalysis depends on serine 178, which acts as the Acyl-ester intermediate.

This sequence belongs to the amidase family. GatA subfamily. As to quaternary structure, heterotrimer of A, B and C subunits.

It catalyses the reaction L-glutamyl-tRNA(Gln) + L-glutamine + ATP + H2O = L-glutaminyl-tRNA(Gln) + L-glutamate + ADP + phosphate + H(+). Allows the formation of correctly charged Gln-tRNA(Gln) through the transamidation of misacylated Glu-tRNA(Gln) in organisms which lack glutaminyl-tRNA synthetase. The reaction takes place in the presence of glutamine and ATP through an activated gamma-phospho-Glu-tRNA(Gln). The protein is Glutamyl-tRNA(Gln) amidotransferase subunit A of Clostridium botulinum (strain Okra / Type B1).